The sequence spans 345 residues: MKVAIIGATGYGGIELIRLLEQHPYFSIASLHSFSQVGECITNVYPHFQNVLVHTLQEIDVEEIEKEAEIVFLATPAGVSAELTPKLLAVGLKVIDLSGDFRMKDPFIYEQWYKRAAAKEGVLREAVYGLSEWKRSEIQKANLIANPGCFATAALLAILPLVRSGIIEEDSIIIDAKSGVSGAGKTPTTMTHFPELYDNLRIYKVNEHQHIPEIEQMLAEWNRETKPITFSTHLIPISRGIMVTLYAKVKREMEIEQLQQLYEEAYEQSAFIRIRMQGEFPSPKEVRGSNYCDMGIAYDERTGRVTIVSVIDNMMKGAAGQAIQNANIVAGLEETTGLQHMPLYL.

Cys149 is a catalytic residue.

The protein belongs to the NAGSA dehydrogenase family. Type 1 subfamily.

The protein localises to the cytoplasm. It carries out the reaction N-acetyl-L-glutamate 5-semialdehyde + phosphate + NADP(+) = N-acetyl-L-glutamyl 5-phosphate + NADPH + H(+). It participates in amino-acid biosynthesis; L-arginine biosynthesis; N(2)-acetyl-L-ornithine from L-glutamate: step 3/4. Functionally, catalyzes the NADPH-dependent reduction of N-acetyl-5-glutamyl phosphate to yield N-acetyl-L-glutamate 5-semialdehyde. This Bacillus anthracis protein is N-acetyl-gamma-glutamyl-phosphate reductase.